Consider the following 85-residue polypeptide: Small integral membrane protein 2 (85 aa).

Residues 21–43 (GHAISILFGFWTSFICDTYIVLA) form a helical membrane-spanning segment. Residues 51–85 (SPDVSASSDEPYARIQQSRRQCHAEEDQSQVPEAG) are disordered.

It localises to the membrane. This Homo sapiens (Human) protein is Small integral membrane protein 2 (SMIM2).